Reading from the N-terminus, the 296-residue chain is Solute carrier protein FPSE_08119 (296 aa).

3 helical membrane passes run 12-32, 122-142, and 219-239; these read GLAA…GMVA, AGVG…VILI, and AVAA…FDFV. Solcar repeat units follow at residues 16-102, 114-205, and 213-296; these read LQTA…FEKE, LSFG…AKNQ, and SPPV…GPHS.

It belongs to the mitochondrial carrier (TC 2.A.29) family.

The protein resides in the mitochondrion inner membrane. Functionally, solute carrier protein; part of the Fusarium detoxification of benzoxazolinone cluster involved in the degradation of benzoxazolinones produced by the host plant. Maize, wheat, and rye produce the 2 benzoxazinone phytoanticipins 2,4-dihy-droxy-7-methoxy-1,4-benzoxazin-3-one (DIMBOA) and 2,4-dihydroxy-1,4-benzoxazin-3-one (DIBOA) that, due to their inherent instability once released, spontaneously degrade to the more stable corresponding benzoxazolinones, 6-methoxy-2-benzoxazolinone (MBOA) and 2-benzoxazolinone (BOA), respectively. In Fusarium pseudograminearum (strain CS3096) (Wheat and barley crown-rot fungus), this protein is Solute carrier protein FPSE_08119.